A 512-amino-acid chain; its full sequence is Glutathione-binding protein GsiB (512 aa).

The signal sequence occupies residues 1-26 (MARAVHRSGLVALGIVTALMASCAFA).

It belongs to the bacterial solute-binding protein 5 family. In terms of assembly, the complex is composed of two ATP-binding proteins (GsiA), two transmembrane proteins (GsiC and GsiD) and a solute-binding protein (GsiB).

The protein resides in the periplasm. In terms of biological role, part of the ABC transporter complex GsiABCD involved in glutathione import. Binds glutathione. The chain is Glutathione-binding protein GsiB from Shigella dysenteriae serotype 1 (strain Sd197).